The following is a 762-amino-acid chain: cGMP-dependent protein kinase 2 (762 aa).

Positions 1-25 (MGNGSVKPKHSKHPDGQSGNLSNEA) are disordered. A lipid anchor (N-myristoyl glycine) is attached at Gly-2. Residues Ser-110 and Ser-117 each carry the phosphoserine modification. Residues 112 to 138 (LVSLHSRRGAKAGVSAEPTSRTYDLNK) form a disordered region. A cGMP-binding, high affinity; cAMP-binding, moderate affinity region spans residues 168 to 283 (FLKRLDPQQI…DEEYRNFLRS (116 aa)). 3',5'-cyclic GMP contacts are provided by residues 232–235 (GELA), 242–243 (RT), Lys-347, 356–359 (GEKA), 366–367 (RS), Asp-412, and Arg-415. The cGMP-binding, high affinity; cAMP-binding, low affinity stretch occupies residues 286 to 416 (LLKNLPEDKL…TLNRDDEKRH (131 aa)). Ser-431 carries the post-translational modification Phosphoserine. The 259-residue stretch at 453 to 711 (LEIIATLGVG…INDIKKHRWL (259 aa)) folds into the Protein kinase domain. ATP contacts are provided by residues 459-467 (LGVGGFGRV) and Lys-482. The Proton acceptor role is filled by Asp-576. Phosphothreonine is present on Thr-609. The AGC-kinase C-terminal domain maps to 712-762 (NGFNWEGLKARSLPSPLRRELSGPIDHSYFDKYPPEKGVPPDEMSGWDKDF). Residues 740–762 (YFDKYPPEKGVPPDEMSGWDKDF) form a disordered region.

It belongs to the protein kinase superfamily. AGC Ser/Thr protein kinase family. cGMP subfamily. As to quaternary structure, interacts with GRIA1/GLUR1. Myristoylation mediates membrane localization. In terms of tissue distribution, highly expressed in intestinal mucosa and is 20 times less abundant in brain and kidney. Expressed in jejunum, in the apical domain of the villus epithelium.

Its subcellular location is the apical cell membrane. It localises to the cell membrane. It catalyses the reaction L-seryl-[protein] + ATP = O-phospho-L-seryl-[protein] + ADP + H(+). It carries out the reaction L-threonyl-[protein] + ATP = O-phospho-L-threonyl-[protein] + ADP + H(+). Binding of cGMP results in enzyme activation. Functionally, crucial regulator of intestinal secretion and bone growth. Phosphorylates and activates CFTR on the plasma membrane. Plays a key role in intestinal secretion by regulating cGMP-dependent translocation of CFTR in jejunum. Acts downstream of NMDAR to activate the plasma membrane accumulation of GRIA1/GLUR1 in synapse and increase synaptic plasticity. Phosphorylates GRIA1/GLUR1 at Ser-863. Acts as regulator of gene expression and activator of the extracellular signal-regulated kinases MAPK3/ERK1 and MAPK1/ERK2 in mechanically stimulated osteoblasts. Under fluid shear stress, mediates ERK activation and subsequent induction of FOS, FOSL1/FRA1, FOSL2/FRA2 and FOSB that play a key role in the osteoblast anabolic response to mechanical stimulation. This is cGMP-dependent protein kinase 2 (Prkg2) from Rattus norvegicus (Rat).